The chain runs to 220 residues: Deoxyribose-phosphate aldolase (220 aa).

The active-site Proton donor/acceptor is Asp-89. Lys-151 serves as the catalytic Schiff-base intermediate with acetaldehyde. Lys-180 serves as the catalytic Proton donor/acceptor.

Belongs to the DeoC/FbaB aldolase family. DeoC type 1 subfamily.

The protein resides in the cytoplasm. It catalyses the reaction 2-deoxy-D-ribose 5-phosphate = D-glyceraldehyde 3-phosphate + acetaldehyde. It participates in carbohydrate degradation; 2-deoxy-D-ribose 1-phosphate degradation; D-glyceraldehyde 3-phosphate and acetaldehyde from 2-deoxy-alpha-D-ribose 1-phosphate: step 2/2. In terms of biological role, catalyzes a reversible aldol reaction between acetaldehyde and D-glyceraldehyde 3-phosphate to generate 2-deoxy-D-ribose 5-phosphate. This Streptococcus pneumoniae (strain Taiwan19F-14) protein is Deoxyribose-phosphate aldolase.